Reading from the N-terminus, the 119-residue chain is Non-specific lipid-transfer protein 12 (119 aa).

An N-terminal signal peptide occupies residues 1–24 (MAFTPKIITCLIVLTIYMASPTES). Disulfide bonds link Cys28/Cys75, Cys38/Cys52, Cys53/Cys98, and Cys73/Cys112.

It belongs to the plant LTP family.

Its function is as follows. Plant non-specific lipid-transfer proteins transfer phospholipids as well as galactolipids across membranes. May play a role in wax or cutin deposition in the cell walls of expanding epidermal cells and certain secretory tissues. In Arabidopsis thaliana (Mouse-ear cress), this protein is Non-specific lipid-transfer protein 12 (LTP12).